A 348-amino-acid chain; its full sequence is Protein RecA (348 aa).

Residue 66–73 (GPESSGKT) coordinates ATP.

Belongs to the RecA family.

It is found in the cytoplasm. Its function is as follows. Can catalyze the hydrolysis of ATP in the presence of single-stranded DNA, the ATP-dependent uptake of single-stranded DNA by duplex DNA, and the ATP-dependent hybridization of homologous single-stranded DNAs. It interacts with LexA causing its activation and leading to its autocatalytic cleavage. This Neisseria meningitidis serogroup B (strain ATCC BAA-335 / MC58) protein is Protein RecA.